We begin with the raw amino-acid sequence, 305 residues long: Porphobilinogen deaminase (305 aa).

C238 carries the post-translational modification S-(dipyrrolylmethanemethyl)cysteine.

Belongs to the HMBS family. As to quaternary structure, monomer. Dipyrromethane is required as a cofactor.

It carries out the reaction 4 porphobilinogen + H2O = hydroxymethylbilane + 4 NH4(+). The protein operates within porphyrin-containing compound metabolism; protoporphyrin-IX biosynthesis; coproporphyrinogen-III from 5-aminolevulinate: step 2/4. Tetrapolymerization of the monopyrrole PBG into the hydroxymethylbilane pre-uroporphyrinogen in several discrete steps. The sequence is that of Porphobilinogen deaminase from Rubrobacter xylanophilus (strain DSM 9941 / JCM 11954 / NBRC 16129 / PRD-1).